Reading from the N-terminus, the 365-residue chain is Peptidyl-prolyl cis-trans isomerase FKBP42 (365 aa).

Positions 1 to 15 (MDESLEHQTQTHDQE) are enriched in basic and acidic residues. Residues 1 to 44 (MDESLEHQTQTHDQESEIVTEGSAVVHSEPSQEGNVPPKVDSEA) form a disordered region. An interaction with MDR1/PGP1 region spans residues 1 to 163 (MDESLEHQTQ…EVIGFDETKE (163 aa)). In terms of domain architecture, PPIase FKBP-type spans 67 to 159 (YSTCFLHYRA…LYEVEVIGFD (93 aa)). Positions 163–337 (EGKARSDMTV…GKDEGGAKSK (175 aa)) are interaction with MRP1. 3 TPR repeats span residues 179-212 (ADRRKMDGNSLFKEEKLEEAMQQYEMAIAYMGDD), 230-263 (NPCHLNIAACLIKLKRYDEAIGHCNIVLTEEEKN), and 264-297 (PKALFRRGKAKAELGQMDSARDDFRKAQKYAPDD). Residues 310-326 (QEKALYQKQKEMYKGIF) are calmodulin-binding. A helical; Anchor for type IV membrane protein transmembrane segment spans residues 338-357 (SLFWLIVLWQWFVSLFSRIF).

This sequence belongs to the FKBP-type PPIase family. As to quaternary structure, interacts with calmodulin (CaM), MRP1, MRP2, MDR1/PGP1, MDR11/PGP19 and SHD/HSP90. Interacts with 1-naphthylphthalamic acid (NPA).

The protein resides in the cell membrane. The protein localises to the vacuole membrane. It localises to the endoplasmic reticulum. It catalyses the reaction [protein]-peptidylproline (omega=180) = [protein]-peptidylproline (omega=0). Its function is as follows. PPIases accelerate the folding of proteins. It catalyzes the cis-trans isomerization of proline imidic peptide bonds in oligopeptides. Modulates the uptake of MRP substrates into the vacuole; reduces metolachlor-GS (MOC-GS) and enhances 17-beta-estradiol 17-(beta-D-glucuronide) (E(2)17betaG) uptake. Regulates cell elongation and orientation. Functions as a positive regulator of PGP1-mediated auxin transport. Confers drug modulation of PGP1 efflux activity as interaction with NPA or flavonol quercetin prevents its physical and functional interaction with PGP1. Required for the proper localization of auxin-related ABCB transporters. Plays a role in brassinosteroid (BR) signaling pathway. Required for seed development by promoting stamen elongation and, to a lesser extent, anther dehiscence and pollen maturation, probably as a chaperone helping ABCB1 and ABCB19 auxin transporters localization and activation. Involved in auxin signaling in nectaries to promote starch accumulation to attract visiting pollinators. In Arabidopsis thaliana (Mouse-ear cress), this protein is Peptidyl-prolyl cis-trans isomerase FKBP42.